The sequence spans 216 residues: Ribosomal RNA small subunit methyltransferase G (216 aa).

S-adenosyl-L-methionine is bound by residues glycine 86, leucine 91, 137–138, and arginine 155; that span reads VE.

The protein belongs to the methyltransferase superfamily. RNA methyltransferase RsmG family.

The protein localises to the cytoplasm. The catalysed reaction is guanosine(527) in 16S rRNA + S-adenosyl-L-methionine = N(7)-methylguanosine(527) in 16S rRNA + S-adenosyl-L-homocysteine. Specifically methylates the N7 position of guanine in position 527 of 16S rRNA. The chain is Ribosomal RNA small subunit methyltransferase G from Lawsonia intracellularis (strain PHE/MN1-00).